We begin with the raw amino-acid sequence, 294 residues long: 33 kDa chaperonin (294 aa).

Disulfide bonds link Cys236–Cys238 and Cys269–Cys272.

The protein belongs to the HSP33 family. Post-translationally, under oxidizing conditions two disulfide bonds are formed involving the reactive cysteines. Under reducing conditions zinc is bound to the reactive cysteines and the protein is inactive.

It localises to the cytoplasm. Functionally, redox regulated molecular chaperone. Protects both thermally unfolding and oxidatively damaged proteins from irreversible aggregation. Plays an important role in the bacterial defense system toward oxidative stress. This Desulfotalea psychrophila (strain LSv54 / DSM 12343) protein is 33 kDa chaperonin.